A 102-amino-acid chain; its full sequence is NADH-quinone oxidoreductase subunit K (102 aa).

Transmembrane regions (helical) follow at residues 3–23 (IGLT…AFGI), 31–51 (IVLL…LVAF), and 66–86 (FILT…VVYF).

This sequence belongs to the complex I subunit 4L family. In terms of assembly, NDH-1 is composed of 14 different subunits. Subunits NuoA, H, J, K, L, M, N constitute the membrane sector of the complex.

The protein resides in the cell inner membrane. The catalysed reaction is a quinone + NADH + 5 H(+)(in) = a quinol + NAD(+) + 4 H(+)(out). Functionally, NDH-1 shuttles electrons from NADH, via FMN and iron-sulfur (Fe-S) centers, to quinones in the respiratory chain. The immediate electron acceptor for the enzyme in this species is believed to be ubiquinone. Couples the redox reaction to proton translocation (for every two electrons transferred, four hydrogen ions are translocated across the cytoplasmic membrane), and thus conserves the redox energy in a proton gradient. In Rhodospirillum centenum (strain ATCC 51521 / SW), this protein is NADH-quinone oxidoreductase subunit K.